The chain runs to 441 residues: uncharacterized protein (441 aa).

217–224 (GETGTGKT) is a binding site for ATP.

This sequence belongs to the GSP E family.

This is an uncharacterized protein from Bacillus anthracis.